Here is a 324-residue protein sequence, read N- to C-terminus: Fibronectin type III domain-containing protein 8 (324 aa).

One can recognise a Fibronectin type-III domain in the interval 179-280 (PDTPFIFEHT…KPYKFATLAT (102 aa)).

The chain is Fibronectin type III domain-containing protein 8 (FNDC8) from Macaca fascicularis (Crab-eating macaque).